We begin with the raw amino-acid sequence, 894 residues long: Valine--tRNA ligase (894 aa).

Residues 1-22 are compositionally biased toward polar residues; the sequence is MKSIQTPSKSHTNTKETPVMSQ. The tract at residues 1–28 is disordered; it reads MKSIQTPSKSHTNTKETPVMSQEETKGY. Positions 69–79 match the 'HIGH' region motif; the sequence is PNVTGSLHIGH. The short motif at 554–558 is the 'KMSKS' region element; the sequence is KMSKS. Residue Lys-557 participates in ATP binding. A coiled-coil region spans residues 832–894; the sequence is IISRLEKQQE…VKVELQGIKG (63 aa).

Belongs to the class-I aminoacyl-tRNA synthetase family. ValS type 1 subfamily. As to quaternary structure, monomer.

The protein resides in the cytoplasm. It catalyses the reaction tRNA(Val) + L-valine + ATP = L-valyl-tRNA(Val) + AMP + diphosphate. In terms of biological role, catalyzes the attachment of valine to tRNA(Val). As ValRS can inadvertently accommodate and process structurally similar amino acids such as threonine, to avoid such errors, it has a 'posttransfer' editing activity that hydrolyzes mischarged Thr-tRNA(Val) in a tRNA-dependent manner. The protein is Valine--tRNA ligase of Wolinella succinogenes (strain ATCC 29543 / DSM 1740 / CCUG 13145 / JCM 31913 / LMG 7466 / NCTC 11488 / FDC 602W) (Vibrio succinogenes).